Consider the following 493-residue polypeptide: Alpha-amylase-related protein (493 aa).

The first 19 residues, 1 to 19 (MFKFALTLTLCLAGSLSLA), serve as a signal peptide directing secretion. Q20 carries the pyrrolidone carboxylic acid modification. A disulfide bond links C47 and C103. Residues N117, Q168, and D177 each contribute to the Ca(2+) site. C156 and C170 are oxidised to a cystine. R205 contacts chloride. D207 (nucleophile) is an active-site residue. Residue H211 coordinates Ca(2+). E244 acts as the Proton donor in catalysis. Residues N307 and R342 each coordinate chloride. 3 disulfides stabilise this stretch: C375/C381, C417/C440, and C447/C459.

The protein belongs to the glycosyl hydrolase 13 family. Monomer. Ca(2+) serves as cofactor. It depends on chloride as a cofactor. Midgut and fat body.

Its subcellular location is the secreted. The catalysed reaction is Endohydrolysis of (1-&gt;4)-alpha-D-glucosidic linkages in polysaccharides containing three or more (1-&gt;4)-alpha-linked D-glucose units.. This is Alpha-amylase-related protein (Amyrel) from Drosophila melanogaster (Fruit fly).